Reading from the N-terminus, the 267-residue chain is Thiazole synthase (267 aa).

Lysine 101 serves as the catalytic Schiff-base intermediate with DXP. 1-deoxy-D-xylulose 5-phosphate is bound by residues glycine 162, 188–189 (AG), and 210–211 (NT). The segment at 247–267 (HASPSSPAAGVPCLPDPEVPV) is disordered.

It belongs to the ThiG family. In terms of assembly, homotetramer. Forms heterodimers with either ThiH or ThiS.

It localises to the cytoplasm. The enzyme catalyses [ThiS sulfur-carrier protein]-C-terminal-Gly-aminoethanethioate + 2-iminoacetate + 1-deoxy-D-xylulose 5-phosphate = [ThiS sulfur-carrier protein]-C-terminal Gly-Gly + 2-[(2R,5Z)-2-carboxy-4-methylthiazol-5(2H)-ylidene]ethyl phosphate + 2 H2O + H(+). It functions in the pathway cofactor biosynthesis; thiamine diphosphate biosynthesis. Its function is as follows. Catalyzes the rearrangement of 1-deoxy-D-xylulose 5-phosphate (DXP) to produce the thiazole phosphate moiety of thiamine. Sulfur is provided by the thiocarboxylate moiety of the carrier protein ThiS. In vitro, sulfur can be provided by H(2)S. The chain is Thiazole synthase from Deinococcus geothermalis (strain DSM 11300 / CIP 105573 / AG-3a).